Reading from the N-terminus, the 204-residue chain is Probable nicotinate-nucleotide adenylyltransferase (204 aa).

Belongs to the NadD family.

The enzyme catalyses nicotinate beta-D-ribonucleotide + ATP + H(+) = deamido-NAD(+) + diphosphate. The protein operates within cofactor biosynthesis; NAD(+) biosynthesis; deamido-NAD(+) from nicotinate D-ribonucleotide: step 1/1. Its function is as follows. Catalyzes the reversible adenylation of nicotinate mononucleotide (NaMN) to nicotinic acid adenine dinucleotide (NaAD). This chain is Probable nicotinate-nucleotide adenylyltransferase, found in Methylacidiphilum infernorum (isolate V4) (Methylokorus infernorum (strain V4)).